Reading from the N-terminus, the 328-residue chain is Malate dehydrogenase (328 aa).

16–22 (GAAGQIS) is a binding site for NAD(+). 2 residues coordinate substrate: Arg-97 and Arg-103. NAD(+) is bound by residues Asn-110, Gln-117, and 134–136 (VGN). 2 residues coordinate substrate: Asn-136 and Arg-167. The active-site Proton acceptor is the His-192.

It belongs to the LDH/MDH superfamily. MDH type 2 family.

It carries out the reaction (S)-malate + NAD(+) = oxaloacetate + NADH + H(+). Functionally, catalyzes the reversible oxidation of malate to oxaloacetate. This Corynebacterium glutamicum (strain R) protein is Malate dehydrogenase.